Consider the following 388-residue polypeptide: Oxytocin receptor (388 aa).

Over 1–38 the chain is Extracellular; the sequence is MEGTPAANWSIELDLGSGVPPGAEGNLTAGPPRRNEAL. Asparagine 8 and asparagine 26 each carry an N-linked (GlcNAc...) asparagine glycan. Residues 39 to 63 traverse the membrane as a helical segment; that stretch reads ARVEVAVLCLILFLALSGNACVLLA. At 64 to 74 the chain is on the cytoplasmic side; the sequence is LRTTRHKHSRL. A helical membrane pass occupies residues 75–97; the sequence is FFFMKHLSIADLVVAVFQVLPQL. At 98–113 the chain is on the extracellular side; that stretch reads LWDITFRFYGPDLLCR. Cysteine 112 and cysteine 187 are disulfide-bonded. A helical membrane pass occupies residues 114 to 135; sequence LVKYLQVVGMFASTYLLLLMSL. The Cytoplasmic segment spans residues 136–154; it reads DRCLAICQPLRSLRRRTDR. Residues 155–175 traverse the membrane as a helical segment; that stretch reads LAVLATWLGCLVASVPQVHIF. Over 176-202 the chain is Extracellular; the sequence is SLREVADGVFDCWAVFIQPWGPKAYVT. Residues 203–225 form a helical membrane-spanning segment; it reads WITLAVYIVPVIVLAACYGLISF. Topologically, residues 226–274 are cytoplasmic; that stretch reads KIWQNLRLKTAAAAAAAEGSDAAGGAGRAALARVSSVKLISKAKIRTVK. A helical membrane pass occupies residues 275-293; that stretch reads MTFIIVLAFIVCWTPFFFV. Topologically, residues 294–308 are extracellular; that stretch reads QMWSVWDVNAPKEAS. The chain crosses the membrane as a helical span at residues 309-331; sequence AFIIAMLLASLNSCCNPWIYMLF. Residues 332–388 lie on the Cytoplasmic side of the membrane; the sequence is TGHLFHELVQRFLCCSARYLKGSRPGETSISKKSNSSTFVLSRRSSSQRSCSQPSSA. The segment at 354–388 is disordered; that stretch reads SRPGETSISKKSNSSTFVLSRRSSSQRSCSQPSSA. Residues serine 365 and serine 367 each carry the phosphoserine modification. Low complexity predominate over residues 365–388; the sequence is SNSSTFVLSRRSSSQRSCSQPSSA.

The protein belongs to the G-protein coupled receptor 1 family. Vasopressin/oxytocin receptor subfamily.

Its subcellular location is the cell membrane. Receptor for oxytocin. The activity of this receptor is mediated by G proteins which activate a phosphatidylinositol-calcium second messenger system. The polypeptide is Oxytocin receptor (Oxtr) (Mus musculus (Mouse)).